The primary structure comprises 588 residues: Aspartate--tRNA ligase (588 aa).

Residue Glu172 coordinates L-aspartate. An aspartate region spans residues 196–199 (QLFK). Position 218 (Arg218) interacts with L-aspartate. Residues 218 to 220 (RDE) and Gln227 each bind ATP. L-aspartate is bound at residue His449. Glu483 is a binding site for ATP. Residue Arg490 coordinates L-aspartate. 535 to 538 (GLDR) serves as a coordination point for ATP.

Belongs to the class-II aminoacyl-tRNA synthetase family. Type 1 subfamily. In terms of assembly, homodimer.

Its subcellular location is the cytoplasm. The catalysed reaction is tRNA(Asp) + L-aspartate + ATP = L-aspartyl-tRNA(Asp) + AMP + diphosphate. In terms of biological role, catalyzes the attachment of L-aspartate to tRNA(Asp) in a two-step reaction: L-aspartate is first activated by ATP to form Asp-AMP and then transferred to the acceptor end of tRNA(Asp). The sequence is that of Aspartate--tRNA ligase from Haemophilus influenzae (strain ATCC 51907 / DSM 11121 / KW20 / Rd).